The following is a 1121-amino-acid chain: Potassium channel subfamily U member 1 (1121 aa).

At 1–24 (MSQTLLDSLNQKELTETSCTIEIQ) the chain is on the extracellular side. Residues 25 to 45 (AAFILSSLATFFGGLIILFLF) traverse the membrane as a helical segment. Residues 46 to 101 (RIALKSSRSWKYVKGPRGLLELFSSRRIEANPLRKLYFHGVFRQRIEMLLSAQTVV) lie on the Cytoplasmic side of the membrane. The helical transmembrane segment at 102–122 (GQVLVILVFVLSIGSLVIYFI) threads the bilayer. Topologically, residues 123-137 (NSMDPVRRCSSYEDK) are extracellular. The helical transmembrane segment at 138-158 (IVHVDLSFNAFFSFYFGLRFW) threads the bilayer. Residues 159–165 (AAEDKIK) are Cytoplasmic-facing. A helical transmembrane segment spans residues 166 to 186 (FWLEMNSIVDIFTIPPTFISY). Topologically, residues 187–188 (YL) are extracellular. A helical; Voltage-sensor membrane pass occupies residues 189–209 (KSNWLGLRFLRALRLLELPKI). Topologically, residues 210-226 (LQILQVIKTSNSVKLSK) are cytoplasmic. A helical transmembrane segment spans residues 227 to 247 (LLSIVISTWFTAAGFLHLVEN). Residues 248–259 (SGDPWLNGRNSQ) lie on the Extracellular side of the membrane. The pore-forming intramembrane region spans 260 to 282 (TMSYFESIYLVTATMSTVGFGDV). The short motif at 276–279 (TVGF) is the Selectivity for potassium element. The Extracellular portion of the chain corresponds to 283 to 290 (VAKTSLGR). Residues 291–311 (IFIVFFTLGSLILFANYIPEM) form a helical membrane-spanning segment. The Cytoplasmic segment spans residues 312 to 1121 (VELFSTRKKY…LDASDIVQEK (810 aa)). RCK N-terminal domains are found at residues 331–473 (KKFI…DNIL) and 718–889 (QNHI…DGML). 2 disordered regions span residues 836–858 (SPTP…KERK) and 1052–1076 (DSSP…GSNF).

It belongs to the potassium channel family. Calcium-activated (TC 1.A.1.3) subfamily. KCa5.1/KCNU1 sub-subfamily. As to quaternary structure, homotetramer; which constitutes the calcium-activated potassium channel. Interact with LRRC52; this interaction changes some channel gating properties, such as shifting gating to more negative potentials at a given pH. Testis-specific. Mainly expressed in spermatocytes. In terms of tissue distribution, expressed in testis, brain, eye and kidney.

It localises to the cell membrane. The protein localises to the cytoplasm. The enzyme catalyses K(+)(in) = K(+)(out). With respect to regulation, regulated by changes in cytosolic pH; activated by alkalization. In contrast to human KCNU1 is not activated by Ca(2+) or Mg(2+). The auxiliary subunit LRRC52 shifts the activation of KCNU1 to more negative potentials at a given pH. Functionally, testis-specific potassium channel activated by both intracellular pH and membrane voltage that mediates export of K(+). Represents the primary spermatozoan K(+) current. The channel underlies a pH-triggered membrane hyperpolarization during the process of sperm capacitation, as sperm encounter the alkaline environment near the ovum in the female reproductive tract, thereby playing an essential for male fertility. The sequence is that of Potassium channel subfamily U member 1 (Kcnu1) from Mus musculus (Mouse).